A 144-amino-acid polypeptide reads, in one-letter code: Granulocyte-macrophage colony-stimulating factor (144 aa).

Positions Met-1 to Ser-17 are cleaved as a signal peptide. Ser-22, Ser-24, and Ser-26 each carry an O-linked (GalNAc...) serine glycan. Residue Thr-27 is glycosylated (O-linked (GalNAc...) threonine; partial). N-linked (GlcNAc...) asparagine glycans are attached at residues Asn-44 and Asn-54. 2 disulfides stabilise this stretch: Cys-71–Cys-113 and Cys-105–Cys-138.

This sequence belongs to the GM-CSF family. Monomer. The signaling GM-CSF receptor complex is a dodecamer of two head-to-head hexamers of two alpha, two beta, and two ligand subunits.

It is found in the secreted. In terms of biological role, cytokine that stimulates the growth and differentiation of hematopoietic precursor cells from various lineages, including granulocytes, macrophages, eosinophils and erythrocytes. The sequence is that of Granulocyte-macrophage colony-stimulating factor (CSF2) from Homo sapiens (Human).